A 186-amino-acid polypeptide reads, in one-letter code: Elongation factor P (186 aa).

This sequence belongs to the elongation factor P family.

It localises to the cytoplasm. It participates in protein biosynthesis; polypeptide chain elongation. Functionally, involved in peptide bond synthesis. Stimulates efficient translation and peptide-bond synthesis on native or reconstituted 70S ribosomes in vitro. Probably functions indirectly by altering the affinity of the ribosome for aminoacyl-tRNA, thus increasing their reactivity as acceptors for peptidyl transferase. The protein is Elongation factor P of Crocosphaera subtropica (strain ATCC 51142 / BH68) (Cyanothece sp. (strain ATCC 51142)).